The following is a 634-amino-acid chain: Putative peptidoglycan O-acetyltransferase YrhL (634 aa).

Transmembrane regions (helical) follow at residues 10–30, 38–58, 79–99, 110–130, 145–165, 172–192, 244–264, 270–290, 307–327, 329–349, and 385–405; these read YIPG…TYHL, GFIG…SILL, RLLP…VLFD, AISS…LSYF, LAIE…GMYI, LAAV…VLYE, FLAF…EPFL, LFIS…SSFL, YGIY…QEIG, PVFW…ELSY, and MSIG…SGLA. The segment at 413-481 is disordered; sequence KWTYSSQETN…SQQLKKPADT (69 aa). A compositionally biased stretch (polar residues) spans 414 to 429; it reads WTYSSQETNADTSQAS. Composition is skewed to basic and acidic residues over residues 430–447 and 455–470; these read GDKK…EQKT and KENK…KKDT.

Belongs to the acyltransferase 3 family.

The protein resides in the cell membrane. This is Putative peptidoglycan O-acetyltransferase YrhL (yrhL) from Bacillus subtilis (strain 168).